The chain runs to 1162 residues: Isoleucine--tRNA ligase (1162 aa).

The 'HIGH' region signature appears at 50-60 (PSANGMPGIHH). A 'KMSKS' region motif is present at residues 710 to 714 (KMSKR). Position 713 (K713) interacts with ATP.

It belongs to the class-I aminoacyl-tRNA synthetase family. IleS type 2 subfamily. Monomer. The cofactor is Zn(2+).

Its subcellular location is the cytoplasm. The catalysed reaction is tRNA(Ile) + L-isoleucine + ATP = L-isoleucyl-tRNA(Ile) + AMP + diphosphate. Its function is as follows. Catalyzes the attachment of isoleucine to tRNA(Ile). As IleRS can inadvertently accommodate and process structurally similar amino acids such as valine, to avoid such errors it has two additional distinct tRNA(Ile)-dependent editing activities. One activity is designated as 'pretransfer' editing and involves the hydrolysis of activated Val-AMP. The other activity is designated 'posttransfer' editing and involves deacylation of mischarged Val-tRNA(Ile). This Bacteroides thetaiotaomicron (strain ATCC 29148 / DSM 2079 / JCM 5827 / CCUG 10774 / NCTC 10582 / VPI-5482 / E50) protein is Isoleucine--tRNA ligase.